Consider the following 239-residue polypeptide: Probable replication-associated protein repA2 (239 aa).

This sequence belongs to the IncFII RepA family.

This protein is essential for plasmid replication; it is involved in copy control functions. This Buchnera aphidicola subsp. Baizongia pistaciae (strain Bp) protein is Probable replication-associated protein repA2 (repA2).